Here is a 1290-residue protein sequence, read N- to C-terminus: MSSECDVGSSKAVVNGLASGNHGPDKDMDPTKICTGKGTVTLRASSSYRGTPSSSPVSPQESPKHESKSGLEPEDPSADEWKLSSSADTNGNAQPSPLAAKGYRSVHPSLSADKPQGSPLLNEVSSSHIETDSQDFPPTSRPSSAYPSTTIVNPTIVLLQHNRDPASERRAGEQDPVPTPAELTSPGRASERRAKDASRRVVRSAQDLSDVSTDEVGIPLRNTERSKDWYKTMFKQIHKLNRDDDSDVHSPRYSFSDDTKSPLSVPRSKSEMNYIEGEKVVKRSATLPLPARSSSLKSSPERNDWEPLDKKVDTRKYRAEPKSIYEYQPGKSSVLTNEKMSRDISPEEIDLKNEPWYKFFSELEFGRPTNLEKDLSFCQAELEADLEKVETVNKSPSANSPQSSAVSPTPDITSEPPGYIYSSNFHAVKRESDGTPGGLASLENERQIYKSVLEGGDIPLQGLSGLKRPSSSASTKVDRKGGNAHMISSSSVHSRTFHTSNALGPGCKHKKPLSAAKACISEILPSKFKPRLSAPSALLQEQKSVLLPSEKAQSCENLCVSLNDSKRGLPLRVGGSIENLLMRSRRDYDSKSSSTMSLQEYGTSSRRPCPLSRKAGLHFSMFYRDMHQINRAGLSLGSISSSSVRDLASHFERSSLTLARGELGASQEGSEHIPKHTVSSRITAFEQLIQRSRSMPSLDFSGRLSKSPTPVLSRSGLTSARSAESLLESTKLRPREMDGMDSGGVYASPTCSNMADHALSFRSLVPSEPLSICSDELDHCSNVSNDSREGSGGSVHGDFPKHRLNKCKGTCPASYTRFTTIRKHEQQSSRQSDWRSDSRGDKNSLLRNIHLMSPLPFRLKKPLQQHPRQPPPSDSSESPAGQKADLPCHDPQDQPHSAGKPQVPTRLSSRHTMARLSHNSEPPLDRPAGLEDCTRAINNGNPVPYSDHGLDRNNNPQSELAAAHGDSESPRHFIPADYLESTEEFIRRRHDDKEKLLADQRRLKREQEEADIAARRHTGVIPTHHQFITNERFGDLLNIDDTAKRKSGLEMRPARAKFDFKAQTLKELPLQKGDVVYIYRQIDQNWYEGEHHGRVGIFPRTYIELLPPAEKAQPRKLAPVQVLEYGEAIAKFNFNGDTQVEMSFRKGERITLLRQVDENWYEGRIPGTSRQGIFPITYVDVLKRPLVKTPVDYIDLPYSSSPSRSATVSPQQPQAQQRRVTPDRSQPSLDLCSYQALYSYVPQNDDELELRDGDIVDVMEKCDDGWFVGTSRRTRQFGTFPGNYVKPLYL.

Disordered stretches follow at residues 1–211, 238–271, and 286–313; these read MSSE…LSDV, HKLN…SKSE, and TLPL…KKVD. Low complexity predominate over residues 45–61; the sequence is SSSYRGTPSSSPVSPQE. Thr51 is modified (phosphothreonine). Ser55, Ser58, and Ser62 each carry phosphoserine. A compositionally biased stretch (basic and acidic residues) spans 62–71; it reads SPKHESKSGL. 2 stretches are compositionally biased toward polar residues: residues 83-95 and 123-153; these read LSSS…NAQP and EVSS…TIVN. Over residues 161–173 the composition is skewed to basic and acidic residues; sequence HNRDPASERRAGE. Residues Asp164 and Asp175 each carry the phosphoserine modification. Phosphothreonine is present on Thr179. A phosphoserine mark is found at Ser185, Ala194, Ser204, Ser209, Ser254, Ser261, Ser270, and Pro288. A compositionally biased stretch (basic and acidic residues) spans 189–199; it reads ASERRAKDASR. The 46-residue stretch at 202-247 folds into the SoHo domain; it reads VRSAQDLSDVSTDEVGIPLRNTERSKDWYKTMFKQIHKLNRDDDSD. Basic and acidic residues predominate over residues 240–260; sequence LNRDDDSDVHSPRYSFSDDTK. Residues 299–313 are compositionally biased toward basic and acidic residues; that stretch reads SPERNDWEPLDKKVD. Residue Tyr325 is modified to Phosphotyrosine; by ABL1. Residues Ser345, Pro346, Tyr357, Ser376, and Ser407 each carry the phosphoserine modification. The tract at residues 389-416 is disordered; the sequence is VETVNKSPSANSPQSSAVSPTPDITSEP. Over residues 392-412 the composition is skewed to polar residues; it reads VNKSPSANSPQSSAVSPTPDI. Residue Tyr421 is modified to Phosphotyrosine; by ABL1. A phosphoserine mark is found at Ser432 and Ser470. Disordered regions lie at residues 463-482, 588-607, 697-739, 783-803, 822-841, and 862-972; these read LSGL…RKGG, YDSK…SSRR, SLDF…EMDG, VSND…PKHR, RKHE…SRGD, and PLQQ…SPRH. Thr475 carries the post-translational modification Phosphothreonine. 2 stretches are compositionally biased toward polar residues: residues 595-606 and 704-722; these read TMSLQEYGTSSR and LSKS…SARS. Ser969 is modified (phosphoserine). SH3 domains lie at 1049–1108 and 1123–1184; these read LEMR…LLPP and LEYG…VLKR. Phosphothreonine is present on Thr1189. 2 positions are modified to phosphotyrosine: Tyr1193 and Tyr1198. The segment covering 1198 to 1210 has biased composition (low complexity); the sequence is YSSSPSRSATVSP. The segment at 1198–1227 is disordered; that stretch reads YSSSPSRSATVSPQQPQAQQRRVTPDRSQP. A phosphoserine mark is found at Ser1201 and Ser1209. Over residues 1211 to 1227 the composition is skewed to polar residues; the sequence is QQPQAQQRRVTPDRSQP. The region spanning 1229 to 1290 is the SH3 3 domain; sequence LDLCSYQALY…PGNYVKPLYL (62 aa). At Tyr1238 the chain carries Phosphotyrosine; by ABL1.

Interacts (via SH3 domain 2) with PXN. Interacts with the long isoform of AFDN and with VCL. AFDN and VCL bind to SORBS1 in a competitive manner and do not form a ternary complex. Interacts with ABL1, CBL, CBLB and INPPL1/SHIP2 through the third SH3 domain. Interaction with ABL1 occurs only after insulin stimulation while this has no effect on the interaction with INPPL1. Interacts with the insulin receptor but dissociates from it following insulin stimulation. Also interacts with SCA7, PTK2/FAK1 and flotillin. Interacts (via third SH3 domain) with the Ten-1 ICD form of TENM1; the interaction induces the translocation of SORBS1 to the nucleus. Interacts with INSM1. Post-translationally, O-glycosylated. As to expression, expressed in all tissues tested: heart, brain, spleen, lung, liver, muscle, kidney and testis. Expressed in 3T3-L1 adipocytes but not in 3T3-L1 fibroblasts.

It is found in the cell junction. The protein resides in the adherens junction. It localises to the cell membrane. Its subcellular location is the cytoplasm. The protein localises to the cytoskeleton. It is found in the focal adhesion. The protein resides in the nucleus. It localises to the nucleus matrix. Its function is as follows. Plays a role in tyrosine phosphorylation of CBL by linking CBL to the insulin receptor. Required for insulin-stimulated glucose transport. Involved in formation of actin stress fibers and focal adhesions. The chain is Sorbin and SH3 domain-containing protein 1 from Mus musculus (Mouse).